A 152-amino-acid chain; its full sequence is MKKIKIKILDDRIGTQFSLPSYATSGSSGLDLRACIKDSIILLPNETVLIPTGIAVYIDDPYITAIILPRSGLGHVQGIVLGNLVGLIDSDYQGQVMVSLWNRGSRNFSVKVGMRIAQIVFIPIIRPIFEIVTNFVVDTERKVQGFGHSGVK.

Substrate-binding positions include 70 to 72 (RSG), asparagine 83, 87 to 89 (LID), and methionine 97.

Belongs to the dUTPase family. Requires Mg(2+) as cofactor.

It catalyses the reaction dUTP + H2O = dUMP + diphosphate + H(+). Its pathway is pyrimidine metabolism; dUMP biosynthesis; dUMP from dCTP (dUTP route): step 2/2. This enzyme is involved in nucleotide metabolism: it produces dUMP, the immediate precursor of thymidine nucleotides and it decreases the intracellular concentration of dUTP so that uracil cannot be incorporated into DNA. In Buchnera aphidicola subsp. Baizongia pistaciae (strain Bp), this protein is Deoxyuridine 5'-triphosphate nucleotidohydrolase.